A 125-amino-acid chain; its full sequence is Holo-[acyl-carrier-protein] synthase (125 aa).

Residues aspartate 8 and glutamate 57 each contribute to the Mg(2+) site.

This sequence belongs to the P-Pant transferase superfamily. AcpS family. Mg(2+) serves as cofactor.

It localises to the cytoplasm. It catalyses the reaction apo-[ACP] + CoA = holo-[ACP] + adenosine 3',5'-bisphosphate + H(+). In terms of biological role, transfers the 4'-phosphopantetheine moiety from coenzyme A to a Ser of acyl-carrier-protein. The protein is Holo-[acyl-carrier-protein] synthase of Halothermothrix orenii (strain H 168 / OCM 544 / DSM 9562).